The chain runs to 263 residues: DNA repair protein RecO (263 aa).

Positions 243–263 are disordered; the sequence is DRKETARETVPTSDGTASNAV. The segment covering 252-263 has biased composition (polar residues); the sequence is VPTSDGTASNAV.

The protein belongs to the RecO family.

In terms of biological role, involved in DNA repair and RecF pathway recombination. The sequence is that of DNA repair protein RecO from Neisseria meningitidis serogroup C / serotype 2a (strain ATCC 700532 / DSM 15464 / FAM18).